The chain runs to 350 residues: Galactokinase (350 aa).

Residue 14 to 17 (EHTD) participates in substrate binding. Residues S46 and 98–104 (GSGLSSS) each bind ATP. Residues S104 and E136 each contribute to the Mg(2+) site. Residue D148 is the Proton acceptor of the active site. Y197 lines the substrate pocket.

Belongs to the GHMP kinase family. GalK subfamily.

The protein localises to the cytoplasm. It carries out the reaction alpha-D-galactose + ATP = alpha-D-galactose 1-phosphate + ADP + H(+). It functions in the pathway carbohydrate metabolism; galactose metabolism. In terms of biological role, catalyzes the transfer of the gamma-phosphate of ATP to D-galactose to form alpha-D-galactose-1-phosphate (Gal-1-P). The polypeptide is Galactokinase (Thermococcus kodakarensis (strain ATCC BAA-918 / JCM 12380 / KOD1) (Pyrococcus kodakaraensis (strain KOD1))).